The primary structure comprises 284 residues: MAQLLDGKEISKVLKEEIKEEVKRWKEQGVNPKLAVVLVGDDPASVVYAKSKQKVSDSLGIDFELTVLPADSSEESILALIDSLNANPDVHGIMIELPLPKHISKERVMAAVRPDKDVDGVHPINRGYILSGEEGLFPATPESCIEIMLRSGVEIAGKHVVIVGRGETVGKPLVFLILKHNATVTICHSRTPDLGAFTRQADIIVAAVGKAKLVKKDMVKPGAIVVDAGINEIPGGICGDVDFEEVKEVASLISPVPGGVGSLTTALIMKNVLKGITLQRKEGQ.

NADP(+) is bound by residues 164–166 (GRG), Ser189, and Ile230.

Belongs to the tetrahydrofolate dehydrogenase/cyclohydrolase family. In terms of assembly, homodimer.

It carries out the reaction (6R)-5,10-methylene-5,6,7,8-tetrahydrofolate + NADP(+) = (6R)-5,10-methenyltetrahydrofolate + NADPH. The enzyme catalyses (6R)-5,10-methenyltetrahydrofolate + H2O = (6R)-10-formyltetrahydrofolate + H(+). Its pathway is one-carbon metabolism; tetrahydrofolate interconversion. Catalyzes the oxidation of 5,10-methylenetetrahydrofolate to 5,10-methenyltetrahydrofolate and then the hydrolysis of 5,10-methenyltetrahydrofolate to 10-formyltetrahydrofolate. In Desulfitobacterium hafniense (strain Y51), this protein is Bifunctional protein FolD 2.